Consider the following 321-residue polypeptide: F420-non-reducing hydrogenase iron-sulfur subunit G (321 aa).

This sequence belongs to the [NiFe]/[NiFeSe] hydrogenase small subunit family. As to quaternary structure, the F420-non-reducing hydrogenase is composed of three subunits; MvhA, MvhD and MvhG. It forms a complex with the heterodisulfide reductase (Hdr).

It is found in the cytoplasm. Its function is as follows. Part of a complex that provides reducing equivalents for heterodisulfide reductase. This Archaeoglobus profundus (strain DSM 5631 / JCM 9629 / NBRC 100127 / Av18) protein is F420-non-reducing hydrogenase iron-sulfur subunit G (mvhG).